Reading from the N-terminus, the 2896-residue chain is Hemocyanin G-type, units Oda to Odg (2896 aa).

Residues 1–419 form a functional unit Oda region; sequence NLIRKDVDAL…ADMVVVDKTG (419 aa). Histidine 41 contributes to the Cu cation binding site. Residues cysteine 47 and cysteine 57 are joined by a disulfide bond. Residues 58 to 60 constitute a cross-link (2'-(S-cysteinyl)-histidine (Cys-His)); sequence CLH. Cu cation contacts are provided by histidine 60, histidine 69, histidine 178, histidine 182, and histidine 209. Disulfide bonds link cysteine 168/cysteine 234 and cysteine 321/cysteine 333. Residue asparagine 386 is glycosylated (N-linked (GlcNAc...) asparagine). Positions 420–834 are functional unit Odb; sequence LNVRKDLQSL…KESGVVFDEL (415 aa). Residue histidine 460 participates in Cu cation binding. A disulfide bridge links cysteine 466 with cysteine 477. The segment at residues 478 to 480 is a cross-link (2'-(S-cysteinyl)-histidine (Cys-His)); it reads CVH. 5 residues coordinate Cu cation: histidine 480, histidine 489, histidine 601, histidine 605, and histidine 632. Cysteines 591 and 657 form a disulfide. Asparagine 804 is a glycosylation site (N-linked (GlcNAc...) asparagine). The interval 835–1254 is functional unit Odc; sequence YRSRRDVSSL…GIWVEPVTSA (420 aa). Cu cation is bound at residue histidine 875. An intrachain disulfide couples cysteine 881 to cysteine 892. The segment at residues 893-895 is a cross-link (2'-(S-cysteinyl)-histidine (Cys-His)); it reads CHH. Histidine 895, histidine 904, histidine 1013, histidine 1017, histidine 1044, and histidine 1292 together coordinate Cu cation. A disulfide bond links cysteine 1003 and cysteine 1070. The tract at residues 1255–1667 is functional unit Odd; that stretch reads NRIRKNLNAL…ADIKSEEGNE (413 aa). A disulfide bridge connects residues cysteine 1298 and cysteine 1309. Residues 1310 to 1312 constitute a cross-link (2'-(S-cysteinyl)-histidine (Cys-His)); that stretch reads CIH. Positions 1312, 1321, 1425, 1429, and 1456 each coordinate Cu cation. A disulfide bridge links cysteine 1415 with cysteine 1482. A glycan (N-linked (GlcNAc...) asparagine) is linked at asparagine 1496. A disulfide bond links cysteine 1571 and cysteine 1581. Residue asparagine 1634 is glycosylated (N-linked (GlcNAc...) asparagine). Residues 1668–2085 are functional unit Ode; that stretch reads YLVRKNVERL…NEDADIDTPL (418 aa). Histidine 1708 lines the Cu cation pocket. An intrachain disulfide couples cysteine 1714 to cysteine 1725. A cross-link (2'-(S-cysteinyl)-histidine (Cys-His)) is located at residues 1726 to 1728; the sequence is CLH. The Cu cation site is built by histidine 1728, histidine 1737, histidine 1849, histidine 1853, and histidine 1880. Cystine bridges form between cysteine 1839–cysteine 1906 and cysteine 1997–cysteine 2003. Residue asparagine 2055 is glycosylated (N-linked (GlcNAc...) asparagine). The segment at 2086-2502 is functional unit Odf; it reads NHIRRNVESL…REVHKKTVGD (417 aa). Histidine 2126 contributes to the Cu cation binding site. Residues cysteine 2131 and cysteine 2141 are joined by a disulfide bond. A cross-link (2'-(S-cysteinyl)-histidine (Cys-His)) is located at residues 2142 to 2144; sequence CLH. Cu cation-binding residues include histidine 2144 and histidine 2153. N-linked (GlcNAc...) asparagine glycosylation is present at asparagine 2201. Disulfide bonds link cysteine 2252–cysteine 2319 and cysteine 2406–cysteine 2411. Cu cation-binding residues include histidine 2262, histidine 2266, and histidine 2293. The tract at residues 2503 to 2896 is functional unit Odg; that stretch reads AIIRKNVNSL…VFLAPAKTTH (394 aa). Cu cation is bound at residue histidine 2543. A disulfide bridge links cysteine 2549 with cysteine 2559. Asparagine 2553 carries an N-linked (GlcNAc...) asparagine glycan. The segment at residues 2560-2562 is a cross-link (2'-(S-cysteinyl)-histidine (Cys-His)); it reads CQH. Histidine 2562, histidine 2571, histidine 2671, histidine 2675, and histidine 2702 together coordinate Cu cation. Cystine bridges form between cysteine 2661–cysteine 2728 and cysteine 2815–cysteine 2821.

The protein belongs to the tyrosinase family. Hemocyanin subfamily. As to quaternary structure, decamers of large identical subunits (350 kDa), each containing 7 globular oxygen-binding functional units: ODA, ODB, ODC, ODD, ODE, ODF, and ODG. Decamer formation requires the presence of magnesium ions. Cu(2+) is required as a cofactor.

In terms of biological role, hemocyanins are copper-containing oxygen carriers occurring freely dissolved in the hemolymph of many mollusks and arthropods. The polypeptide is Hemocyanin G-type, units Oda to Odg (ODHCY) (Enteroctopus dofleini (North Pacific giant octopus)).